The primary structure comprises 585 residues: Cysteine/serine-rich nuclear protein 3 (585 aa).

2 disordered regions span residues 1–52 and 335–395; these read MSGI…TPSS and ELDC…GFVE. Residues 30–40 are compositionally biased toward low complexity; sequence SSESADSGDSV. Over residues 41-52 the composition is skewed to polar residues; that stretch reads NPSTSSHFTPSS. Residues 335–349 show a composition bias toward acidic residues; that stretch reads ELDCQGEEEEEEEDG. The segment covering 351–366 has biased composition (polar residues); it reads SFCSGVTDSSTQSLAP. A compositionally biased stretch (acidic residues) spans 368-389; sequence ESDEEEEEEEEEEEEEDDDDDK.

It belongs to the AXUD1 family.

Its subcellular location is the nucleus. In terms of biological role, binds to the consensus sequence 5'-AGAGTG-3' and has transcriptional activator activity. Plays a role in apoptosis. This is Cysteine/serine-rich nuclear protein 3 (CSRNP3) from Homo sapiens (Human).